The chain runs to 256 residues: Probable S-methyl-5'-thioinosine phosphorylase (256 aa).

Phosphate is bound by residues T10 and 47 to 48 (RH). M178 contacts substrate. T179 serves as a coordination point for phosphate. 202 to 204 (NYA) contacts substrate.

It belongs to the PNP/MTAP phosphorylase family. MTAP subfamily. As to quaternary structure, homotrimer.

The catalysed reaction is S-methyl-5'-thioinosine + phosphate = 5-(methylsulfanyl)-alpha-D-ribose 1-phosphate + hypoxanthine. It participates in purine metabolism; purine nucleoside salvage. Functionally, catalyzes the reversible phosphorylation of S-methyl-5'-thioinosine (MTI) to hypoxanthine and 5-methylthioribose-1-phosphate. Involved in the breakdown of S-methyl-5'-thioadenosine (MTA), a major by-product of polyamine biosynthesis. Catabolism of (MTA) occurs via deamination to MTI and phosphorolysis to hypoxanthine. This chain is Probable S-methyl-5'-thioinosine phosphorylase, found in Methanopyrus kandleri (strain AV19 / DSM 6324 / JCM 9639 / NBRC 100938).